Here is a 454-residue protein sequence, read N- to C-terminus: Cerebellar degeneration-related protein 2 (454 aa).

Coiled coils occupy residues 44–142 (ELED…SGQG) and 192–265 (EEEN…QSEH). Residues 134–153 (EELKSSGQGRRSPGKCDQEK) form a disordered region. The residue at position 311 (Ser311) is a Phosphoserine. Positions 346–380 (LHEVDTQYSALKVKYEELLKKCQEEQDSLSHKAVQ) form a coiled coil.

Belongs to the CDR2 family.

The chain is Cerebellar degeneration-related protein 2 (CDR2) from Homo sapiens (Human).